Reading from the N-terminus, the 379-residue chain is Inactive deoxyhypusine synthase (379 aa).

The tract at residues 1 to 48 is disordered; it reads MLASVPAPRPAKKDSAASRRKSASKSTGAAVKDGSSARVSASGAAESP. The segment covering 36–47 has biased composition (low complexity); sequence SARVSASGAAES. NAD(+) contacts are provided by residues 115-119, 141-143, E147, and D256; these read SNMIS and SAG. 146–147 is a binding site for spermidine; sequence EE. D261 lines the spermidine pocket. G302 lines the NAD(+) pocket. H307 is a binding site for spermidine. NAD(+) is bound at residue 323-324; it reads TG. Spermidine-binding positions include 329-331 and 338-344; these read GCV and DDVACGL. 357-358 contacts NAD(+); the sequence is DA.

Belongs to the deoxyhypusine synthase family.

This Leishmania donovani protein is Inactive deoxyhypusine synthase.